The chain runs to 118 residues: NADH-quinone oxidoreductase subunit A (118 aa).

Helical transmembrane passes span 5–25, 61–81, and 90–110; these read YLGISLFLAAGLIIPFLAFAV, FLYALVFVAFDVETVFLYPWA, and FAIVEMFIFITILVVGFWYAW.

This sequence belongs to the complex I subunit 3 family. NDH-1 is composed of 14 different subunits. Subunits NuoA, H, J, K, L, M, N constitute the membrane sector of the complex.

Its subcellular location is the cell membrane. The catalysed reaction is a quinone + NADH + 5 H(+)(in) = a quinol + NAD(+) + 4 H(+)(out). In terms of biological role, NDH-1 shuttles electrons from NADH, via FMN and iron-sulfur (Fe-S) centers, to quinones in the respiratory chain. The immediate electron acceptor for the enzyme in this species is believed to be a menaquinone. Couples the redox reaction to proton translocation (for every two electrons transferred, four hydrogen ions are translocated across the cytoplasmic membrane), and thus conserves the redox energy in a proton gradient. This Heliobacterium modesticaldum (strain ATCC 51547 / Ice1) protein is NADH-quinone oxidoreductase subunit A.